Consider the following 757-residue polypeptide: Elongation factor G, mitochondrial (757 aa).

The transit peptide at 1-39 (MLLVPRVPVVMQGKCGLLKISRPLQGSLSRGFHFSRAHR) directs the protein to the mitochondrion. In terms of domain architecture, tr-type G spans 65-346 (QKLRNIGISA…AIVDYLPNPS (282 aa)). GTP-binding positions include 74–81 (AHIDSGKT), 145–149 (DTPGH), and 199–202 (NKMD).

The protein belongs to the TRAFAC class translation factor GTPase superfamily. Classic translation factor GTPase family. EF-G/EF-2 subfamily.

The protein resides in the mitochondrion. It functions in the pathway protein biosynthesis; polypeptide chain elongation. Mitochondrial GTPase that catalyzes the GTP-dependent ribosomal translocation step during translation elongation. During this step, the ribosome changes from the pre-translocational (PRE) to the post-translocational (POST) state as the newly formed A-site-bound peptidyl-tRNA and P-site-bound deacylated tRNA move to the P and E sites, respectively. Catalyzes the coordinated movement of the two tRNA molecules, the mRNA and conformational changes in the ribosome. The chain is Elongation factor G, mitochondrial from Candida glabrata (strain ATCC 2001 / BCRC 20586 / JCM 3761 / NBRC 0622 / NRRL Y-65 / CBS 138) (Yeast).